The following is a 269-amino-acid chain: Eukaryotic translation initiation factor 3 subunit G-1 (269 aa).

The RRM domain maps to 188–266; sequence AAIRISNLSE…LILSVEWSKP (79 aa).

Belongs to the eIF-3 subunit G family. In terms of assembly, component of the eukaryotic translation initiation factor 3 (eIF-3) complex. The eIF-3 complex interacts with pix.

It is found in the cytoplasm. RNA-binding component of the eukaryotic translation initiation factor 3 (eIF-3) complex, which is involved in protein synthesis of a specialized repertoire of mRNAs and, together with other initiation factors, stimulates binding of mRNA and methionyl-tRNAi to the 40S ribosome. The eIF-3 complex specifically targets and initiates translation of a subset of mRNAs involved in cell proliferation. This subunit can bind 18S rRNA. The sequence is that of Eukaryotic translation initiation factor 3 subunit G-1 from Drosophila mojavensis (Fruit fly).